Here is a 425-residue protein sequence, read N- to C-terminus: Adenylosuccinate synthetase (425 aa).

GTP contacts are provided by residues 12 to 18 and 40 to 42; these read GDEGKGK and GHT. Residue Asp13 is the Proton acceptor of the active site. Mg(2+) contacts are provided by Asp13 and Gly40. IMP is bound by residues 13–16, 38–41, Thr127, Arg141, Gln222, Thr237, and Arg301; these read DEGK and NAGH. His41 acts as the Proton donor in catalysis. 297–303 is a binding site for substrate; it reads AVTGRPR. GTP-binding positions include Arg303, 329-331, and 411-413; these read KID and SVG.

This sequence belongs to the adenylosuccinate synthetase family. In terms of assembly, homodimer. The cofactor is Mg(2+).

The protein resides in the cytoplasm. The enzyme catalyses IMP + L-aspartate + GTP = N(6)-(1,2-dicarboxyethyl)-AMP + GDP + phosphate + 2 H(+). It functions in the pathway purine metabolism; AMP biosynthesis via de novo pathway; AMP from IMP: step 1/2. Plays an important role in the de novo pathway of purine nucleotide biosynthesis. Catalyzes the first committed step in the biosynthesis of AMP from IMP. The chain is Adenylosuccinate synthetase from Fusobacterium nucleatum.